A 457-amino-acid chain; its full sequence is Adenylosuccinate synthetase (457 aa).

GTP contacts are provided by residues 45 to 51 (GDEGKGK) and 73 to 75 (GHT). Residue D46 is the Proton acceptor of the active site. Mg(2+) contacts are provided by D46 and G73. IMP contacts are provided by residues 46-49 (DEGK), 71-74 (NAGH), T163, R177, N255, T270, and R334. H74 functions as the Proton donor in the catalytic mechanism. 330–336 (VTTKRVR) is a substrate binding site. GTP is bound by residues R336, 362 to 364 (KLD), and 444 to 446 (GVG).

Belongs to the adenylosuccinate synthetase family. As to quaternary structure, homodimer. Mg(2+) is required as a cofactor.

The protein resides in the cytoplasm. It carries out the reaction IMP + L-aspartate + GTP = N(6)-(1,2-dicarboxyethyl)-AMP + GDP + phosphate + 2 H(+). The protein operates within purine metabolism; AMP biosynthesis via de novo pathway; AMP from IMP: step 1/2. Functionally, plays an important role in the de novo pathway and in the salvage pathway of purine nucleotide biosynthesis. Catalyzes the first committed step in the biosynthesis of AMP from IMP. This Aedes aegypti (Yellowfever mosquito) protein is Adenylosuccinate synthetase.